The chain runs to 489 residues: Heme-based aerotactic transducer HemAT (489 aa).

The Methyl-accepting transducer domain maps to 218–454 (PLSSLEATSQ…EVAEMVDDVD (237 aa)).

Belongs to the methyl-accepting chemotaxis (MCP) protein family. In terms of assembly, homotetramer.

Its function is as follows. Heme-containing signal transducer responsible for aerotaxis, the migratory response toward or away from oxygen. The polypeptide is Heme-based aerotactic transducer HemAT (hemAT) (Halobacterium salinarum (strain ATCC 700922 / JCM 11081 / NRC-1) (Halobacterium halobium)).